The primary structure comprises 122 residues: Large ribosomal subunit protein uL14 (122 aa).

This sequence belongs to the universal ribosomal protein uL14 family. As to quaternary structure, part of the 50S ribosomal subunit. Forms a cluster with proteins L3 and L19. In the 70S ribosome, L14 and L19 interact and together make contacts with the 16S rRNA in bridges B5 and B8.

Binds to 23S rRNA. Forms part of two intersubunit bridges in the 70S ribosome. The sequence is that of Large ribosomal subunit protein uL14 from Dechloromonas aromatica (strain RCB).